A 644-amino-acid polypeptide reads, in one-letter code: Protein cueball (644 aa).

The N-terminal stretch at 1–26 (MIRIRFGMDVLLVLLLATCLLSPAHG) is a signal peptide. Residues 27–531 (TPLEWDFAVT…VCLTPKVWTS (505 aa)) are Extracellular-facing. Asparagine 82 and asparagine 108 each carry an N-linked (GlcNAc...) asparagine glycan. LDL-receptor class B repeat units follow at residues 121 to 166 (MNLF…DVCR), 167 to 211 (RKLY…DQLS), and 212 to 257 (DRLF…TNDA). N-linked (GlcNAc...) asparagine glycans are attached at residues asparagine 175, asparagine 190, and asparagine 196. N-linked (GlcNAc...) asparagine glycosylation is present at asparagine 313. EGF-like domains follow at residues 398–430 (EIRE…FTGE) and 433–471 (EVSV…ARCE). 5 disulfides stabilise this stretch: cysteine 402-cysteine 411, cysteine 406-cysteine 421, cysteine 437-cysteine 447, cysteine 441-cysteine 459, and cysteine 461-cysteine 470. N-linked (GlcNAc...) asparagine glycans are attached at residues asparagine 473 and asparagine 508. Residues 532 to 552 (SVIIILVIGIVSSLLLVAVIV) traverse the membrane as a helical segment. Topologically, residues 553-644 (HGIRRLYKPK…LIHNMEDDLY (92 aa)) are cytoplasmic.

It belongs to the cueball family.

Its subcellular location is the cell membrane. Its function is as follows. Has a role in spermatogenesis and oogenesis. This is Protein cueball from Drosophila erecta (Fruit fly).